Consider the following 205-residue polypeptide: MTKRSEAKYKIDRRMGQNIWGRPKSPVNRREYGPGQHGQRRKGKLSDFGVQLRAKQKLKGYYANISERQFHSIYVEATRLKGDSGENLIGLLERRLDTVVYRAKFVSTMFAARQFINHGHIKVNGKRVNISSYKVRVGDLIEVKESSKQLAFVLEASQLAERDVPDYIEVDHNKMTAKFGRIPALTDVPFAVQMEPHLIVEFYSR.

Residues 18 to 46 (NIWGRPKSPVNRREYGPGQHGQRRKGKLS) form a disordered region. In terms of domain architecture, S4 RNA-binding spans 94–157 (RRLDTVVYRA…KQLAFVLEAS (64 aa)).

It belongs to the universal ribosomal protein uS4 family. Part of the 30S ribosomal subunit. Contacts protein S5. The interaction surface between S4 and S5 is involved in control of translational fidelity.

In terms of biological role, one of the primary rRNA binding proteins, it binds directly to 16S rRNA where it nucleates assembly of the body of the 30S subunit. Its function is as follows. With S5 and S12 plays an important role in translational accuracy. The protein is Small ribosomal subunit protein uS4 of Rhodopseudomonas palustris (strain HaA2).